A 283-amino-acid chain; its full sequence is Ribosomal RNA small subunit methyltransferase A (283 aa).

S-adenosyl-L-methionine-binding residues include asparagine 29, leucine 31, glycine 56, glutamate 77, aspartate 102, and asparagine 123.

Belongs to the class I-like SAM-binding methyltransferase superfamily. rRNA adenine N(6)-methyltransferase family. RsmA subfamily.

The protein resides in the cytoplasm. It carries out the reaction adenosine(1518)/adenosine(1519) in 16S rRNA + 4 S-adenosyl-L-methionine = N(6)-dimethyladenosine(1518)/N(6)-dimethyladenosine(1519) in 16S rRNA + 4 S-adenosyl-L-homocysteine + 4 H(+). Specifically dimethylates two adjacent adenosines (A1518 and A1519) in the loop of a conserved hairpin near the 3'-end of 16S rRNA in the 30S particle. May play a critical role in biogenesis of 30S subunits. The sequence is that of Ribosomal RNA small subunit methyltransferase A from Acidobacterium capsulatum (strain ATCC 51196 / DSM 11244 / BCRC 80197 / JCM 7670 / NBRC 15755 / NCIMB 13165 / 161).